A 463-amino-acid chain; its full sequence is Immune-associated nucleotide-binding protein 10 (463 aa).

The 209-residue stretch at 3-211 folds into the AIG1-type G domain; that stretch reads EPIKNIVLVG…YTYQLHRKIK (209 aa). A G1 region spans residues 12–19; the sequence is GRTGNGKS. Residues 12–20 and serine 33 contribute to the GTP site; that span reads GRTGNGKSS. A G2 region spans residues 39–43; sequence GVTMI. Residues 61–64 are G3; sequence DTPG. Positions 131–134 are G4; that stretch reads TGGD. A G5 region spans residues 170–172; that stretch reads DNK. GTP is bound at residue asparagine 171. Residues 173-308 adopt a coiled-coil conformation; the sequence is SKDEKKKVEQ…KQLIAQANRM (136 aa).

It belongs to the TRAFAC class TrmE-Era-EngA-EngB-Septin-like GTPase superfamily. AIG1/Toc34/Toc159-like paraseptin GTPase family. IAN subfamily. Expressed in radicles of the germinating seeds.

This chain is Immune-associated nucleotide-binding protein 10, found in Arabidopsis thaliana (Mouse-ear cress).